Consider the following 104-residue polypeptide: Replication restart protein PriB (104 aa).

The 101-residue stretch at 1–101 folds into the SSB domain; that stretch reads MTNRLVLSGT…LHAEQIDLID (101 aa).

Belongs to the PriB family. In terms of assembly, homodimer. Interacts with PriA and DnaT. Component of the replication restart primosome. Primosome assembly occurs via a 'hand-off' mechanism. PriA binds to replication forks, subsequently PriB then DnaT bind; DnaT then displaces ssDNA to generate the helicase loading substrate.

Its function is as follows. Involved in the restart of stalled replication forks, which reloads the replicative helicase on sites other than the origin of replication; the PriA-PriB pathway is the major replication restart pathway. During primosome assembly it facilitates complex formation between PriA and DnaT on DNA; stabilizes PriA on DNA. Stimulates the DNA unwinding activity of PriA helicase. This is Replication restart protein PriB from Enterobacter sp. (strain 638).